Reading from the N-terminus, the 270-residue chain is Cell division protein DivIB (270 aa).

The Cytoplasmic portion of the chain corresponds to Met1–Arg38. The helical transmembrane segment at Leu39–Asp59 threads the bilayer. Residues Lys60 to Ser270 are Extracellular-facing. The 72-residue stretch at Ser64 to Ala135 folds into the POTRA domain.

This sequence belongs to the FtsQ/DivIB family. DivIB subfamily.

It is found in the cell membrane. Cell division protein that may be involved in stabilizing or promoting the assembly of the division complex. The polypeptide is Cell division protein DivIB (Erysipelothrix rhusiopathiae (strain Fujisawa)).